A 784-amino-acid chain; its full sequence is Transcription factor kayak (784 aa).

3 stretches are compositionally biased toward low complexity: residues 97-106, 115-126, and 198-227; these read QPTQSAYQQQ, NNNNNSNNNANM, and QQQQ…QQQQ. Disordered stretches follow at residues 97–126, 196–231, 358–404, and 421–464; these read QPTQ…NANM, YNQQ…HLPT, PGSD…GNGS, and SGRG…KRRI. Positions 365-378 are enriched in polar residues; the sequence is SNGSWNEGQLNDDQ. Residues 380–397 are compositionally biased toward low complexity; sequence TTDTSSAATDSTSYQNGG. Residues 421 to 438 show a composition bias toward polar residues; that stretch reads SGRGSGLAANSTTSNSAT. One can recognise a bZIP domain in the interval 459–522; sequence EEKRRIRRER…SQLEYVLQTH (64 aa). Residues 461-463 are basic motif; the sequence is KRR. The tract at residues 464 to 471 is leucine-zipper; that stretch reads IRRERNKL. At Ser594 the chain carries Phosphoserine. Disordered stretches follow at residues 616–635 and 759–784; these read QDGA…TPAK and PTCS…LVSL.

This sequence belongs to the bZIP family. Fos subfamily. Homodimer. Heterodimer with Jra. The kay-Jra heterodimer binds more stably to the AP-1 site than either of the two proteins alone.

The protein resides in the nucleus. Its function is as follows. Developmentally regulated transcription factor AP-1 binds and recognizes the enhancer DNA sequence: 5'-TGA[CG]TCA-3'. May play a role in the function or determination of a particular subset of cells in the developing embryo. It is able to carry out its function either independently of or in conjunction with Jra. The chain is Transcription factor kayak from Drosophila mojavensis (Fruit fly).